Here is a 353-residue protein sequence, read N- to C-terminus: O-antigen chain mannosyltransferase RfbU (353 aa).

This sequence belongs to the glycosyltransferase group 1 family. Glycosyltransferase 4 subfamily.

The catalysed reaction is alpha-L-rhamnosyl-(1-&gt;3)-alpha-D-galactosyl-1-diphospho-di-trans,octa-cis-undecaprenol + GDP-alpha-D-mannose = alpha-D-Man-(1-&gt;4)-alpha-L-Rha-(1-&gt;3)-alpha-D-Gal-di-trans,octa-cis-undecaprenyl diphosphate + GDP + H(+). Its pathway is bacterial outer membrane biogenesis; LPS O-antigen biosynthesis. Its function is as follows. Mannosyltransferase involved in the biosynthesis of the repeat unit of the lipopolysaccharide (LPS) O-antigen region. Catalyzes the addition of a mannose to the rhamnosyl-galactosyl-undecaprenyl diphosphate intermediate. This Salmonella typhimurium (strain LT2 / SGSC1412 / ATCC 700720) protein is O-antigen chain mannosyltransferase RfbU.